The sequence spans 254 residues: Imidazole glycerol phosphate synthase subunit HisF (254 aa).

Active-site residues include aspartate 11 and aspartate 130.

It belongs to the HisA/HisF family. In terms of assembly, heterodimer of HisH and HisF.

It localises to the cytoplasm. The catalysed reaction is 5-[(5-phospho-1-deoxy-D-ribulos-1-ylimino)methylamino]-1-(5-phospho-beta-D-ribosyl)imidazole-4-carboxamide + L-glutamine = D-erythro-1-(imidazol-4-yl)glycerol 3-phosphate + 5-amino-1-(5-phospho-beta-D-ribosyl)imidazole-4-carboxamide + L-glutamate + H(+). It participates in amino-acid biosynthesis; L-histidine biosynthesis; L-histidine from 5-phospho-alpha-D-ribose 1-diphosphate: step 5/9. IGPS catalyzes the conversion of PRFAR and glutamine to IGP, AICAR and glutamate. The HisF subunit catalyzes the cyclization activity that produces IGP and AICAR from PRFAR using the ammonia provided by the HisH subunit. The chain is Imidazole glycerol phosphate synthase subunit HisF from Staphylococcus carnosus (strain TM300).